The sequence spans 291 residues: ATP synthase gamma chain (291 aa).

This sequence belongs to the ATPase gamma chain family. F-type ATPases have 2 components, CF(1) - the catalytic core - and CF(0) - the membrane proton channel. CF(1) has five subunits: alpha(3), beta(3), gamma(1), delta(1), epsilon(1). CF(0) has three main subunits: a, b and c.

It is found in the cell inner membrane. Its function is as follows. Produces ATP from ADP in the presence of a proton gradient across the membrane. The gamma chain is believed to be important in regulating ATPase activity and the flow of protons through the CF(0) complex. The polypeptide is ATP synthase gamma chain (Burkholderia lata (strain ATCC 17760 / DSM 23089 / LMG 22485 / NCIMB 9086 / R18194 / 383)).